An 88-amino-acid chain; its full sequence is ATPase inhibitor mai-1, mitochondrial (88 aa).

The segment covering 1-18 (MSGSGSGSGAGHGGGSGG) has biased composition (gly residues). The interval 1–41 (MSGSGSGSGAGHGGGSGGSIREAGGSLGMMGATREEEYFRR) is disordered. A coiled-coil region spans residues 39–87 (FRRQQKDQLDNLKKKLEADMTQSQQEIRDHEKVLEQHQQRLKEIEKGHG).

It belongs to the ATPase inhibitor family. Post-translationally, does not seem to include a transit peptide.

Its subcellular location is the mitochondrion. Functionally, thought to be a regulatory component of the ATP-synthesizing complex in the mitochondria. The polypeptide is ATPase inhibitor mai-1, mitochondrial (mai-1) (Caenorhabditis elegans).